The chain runs to 310 residues: N-acetyl-gamma-glutamyl-phosphate reductase (310 aa).

C117 is an active-site residue.

It belongs to the NAGSA dehydrogenase family. Type 2 subfamily.

Its subcellular location is the cytoplasm. The enzyme catalyses N-acetyl-L-glutamate 5-semialdehyde + phosphate + NADP(+) = N-acetyl-L-glutamyl 5-phosphate + NADPH + H(+). Its pathway is amino-acid biosynthesis; L-arginine biosynthesis; N(2)-acetyl-L-ornithine from L-glutamate: step 3/4. Its function is as follows. Catalyzes the NADPH-dependent reduction of N-acetyl-5-glutamyl phosphate to yield N-acetyl-L-glutamate 5-semialdehyde. This chain is N-acetyl-gamma-glutamyl-phosphate reductase, found in Rhizobium leguminosarum bv. trifolii (strain WSM2304).